Reading from the N-terminus, the 306-residue chain is MVAAGKSDLSLPKTFACSAFAACVGEVCTIPLDTAKVRLQLQKSALAGDVTLPKYRGLLGTVGTIAREEGLRSLWKGVVPGLHRQCLFGGLRIGMYEPVKNLYVGKDFVGDVPLSKKILAGLTTGALGIMVANPTDLVKVRLQAEGKLAAGAPRRYSGALNAYSTIVRQEGVRALWTGLGPNVARNAIINAAELASYDQVKETILKIPGFTDNVVTHILSGLGAGFFAVCIGSPVDVVKSRMMGDSGAYKGTIDCFVKTLKSDGPMAFYKGFIPNFGRLGSWNVIMFLTLEQAKKYVRELDASKRN.

3 Solcar repeats span residues 9–102 (LSLP…VKNL), 112–203 (VPLS…VKET), and 212–296 (DNVV…AKKY). 6 helical membrane passes run 15-35 (FACSAFAACVGEVCTIPLDTA), 71-91 (LRSLWKGVVPGLHRQCLFGGL), 118-138 (ILAGLTTGALGIMVANPTDLV), 177-197 (TGLGPNVARNAIINAAELASY), 218-238 (ILSGLGAGFFAVCIGSPVDVV), and 269-289 (YKGFIPNFGRLGSWNVIMFLT).

Belongs to the mitochondrial carrier (TC 2.A.29) family. Widely expressed.

The protein resides in the mitochondrion inner membrane. Functionally, PUMPS are mitochondrial transporter proteins that create proton leaks across the inner mitochondrial membrane, thus uncoupling oxidative phosphorylation. This leads to a decrease in the efficiency of oxidative phosphorylation and an increase in heat production. Is involved in protecting plant cells against oxidative stress damage and maintaining the redox balance of the mitochondrial electron transport chain to facilitate photosynthetic metabolism. May play a regulatory role during photorespiration. The protein is Mitochondrial uncoupling protein 1 (PUMP1) of Arabidopsis thaliana (Mouse-ear cress).